We begin with the raw amino-acid sequence, 252 residues long: MAYQMELGGESSPQRKAGRGKIEIKRIENTTNRQVTFCKRRNGLLKKAYELSVLCDAEVALIVFSSRGRLYEYSNNSVKGTIERYKKAISDNSNTGSVAEINAQYYQQESAKLRQQIISIQNSNRQLMGETIGSMSPKELRNLEGRLDRSVNRIRSKKNELLFAEIDYMQKREVDLHNDNQLLRAKIAENERNNPSMSLMPGGSNYEQIMPPPQTQPQPFDSRNYFQVAALQPNNHHYSSAGREDQTALQLV.

In terms of domain architecture, MADS-box spans 19 to 73 (RGKIEIKRIENTTNRQVTFCKRRNGLLKKAYELSVLCDAEVALIVFSSRGRLYEY). A K-box domain is found at 103-193 (AQYYQQESAK…RAKIAENERN (91 aa)).

It is found in the nucleus. Functionally, probable transcription factor involved in regulating genes that determines stamen and carpel development in wild-type flowers. In Brassica napus (Rape), this protein is Floral homeotic protein AGAMOUS (AG1).